Here is a 216-residue protein sequence, read N- to C-terminus: Protein InaA (216 aa).

It belongs to the protein kinase superfamily. KdkA/RfaP family.

Its function is as follows. May be an environmental sensor responsive to several stimuli, including internal pH, proton motive force, temperature, and possibly other unknown factors. In Escherichia coli (strain K12), this protein is Protein InaA (inaA).